Consider the following 459-residue polypeptide: Putrescine aminotransferase (459 aa).

Residues 150–151 (GT) and Q274 each bind pyridoxal 5'-phosphate. Position 300 is an N6-(pyridoxal phosphate)lysine (K300). T332 is a binding site for pyridoxal 5'-phosphate.

Belongs to the class-III pyridoxal-phosphate-dependent aminotransferase family. Putrescine aminotransferase subfamily. It depends on pyridoxal 5'-phosphate as a cofactor.

It catalyses the reaction an alkane-alpha,omega-diamine + 2-oxoglutarate = an omega-aminoaldehyde + L-glutamate. It carries out the reaction putrescine + 2-oxoglutarate = 1-pyrroline + L-glutamate + H2O. The catalysed reaction is cadaverine + 2-oxoglutarate = 5-aminopentanal + L-glutamate. The protein operates within amine and polyamine degradation; putrescine degradation; 4-aminobutanal from putrescine (transaminase route): step 1/1. Functionally, catalyzes the aminotransferase reaction from putrescine to 2-oxoglutarate, leading to glutamate and 4-aminobutanal, which spontaneously cyclizes to form 1-pyrroline. This is the first step in one of two pathways for putrescine degradation, where putrescine is converted into 4-aminobutanoate (gamma-aminobutyrate or GABA) via 4-aminobutanal. Also functions as a cadaverine transaminase in a a L-lysine degradation pathway to succinate that proceeds via cadaverine, glutarate and L-2-hydroxyglutarate. The polypeptide is Putrescine aminotransferase (Escherichia coli (strain ATCC 8739 / DSM 1576 / NBRC 3972 / NCIMB 8545 / WDCM 00012 / Crooks)).